A 587-amino-acid chain; its full sequence is Branchpoint-bridging protein (587 aa).

The segment covering 1 to 16 (MLNSRSVGSTGSNNTP) has biased composition (polar residues). Disordered stretches follow at residues 1–64 (MLNS…DGRG) and 121–142 (GDVV…DNHG). Residues 44-64 (DSYKSNSRMDHRPDGYHDGRG) show a composition bias toward basic and acidic residues. 2 positions are modified to phosphoserine: serine 131 and serine 133. Residues 191 to 271 (YVPVKDYPEI…DKINHAIKLI (81 aa)) enclose the KH domain. 2 consecutive CCHC-type zinc fingers follow at residues 309-326 (QVCQ…DCPE) and 334-351 (IVCR…DCPV). Disordered regions lie at residues 375–490 (GGGS…PGTS) and 551–587 (IPGA…YSNR). Positions 379 to 399 (AISNGNGEPQKSIEFSESGAA) are enriched in polar residues. Low complexity predominate over residues 410 to 454 (AAASTSVSSSTSSPAPWAKPASSAAPSNPAPWQQPAAPQSAPALS). Composition is skewed to polar residues over residues 465 to 483 (QPTQ…SQNA) and 563 to 573 (SYNTSESSNLN).

Belongs to the BBP/SF1 family. In terms of assembly, U2AF large subunit (u2af59), U2AF small subunit (u2af23) and bpb1 interact to form a complex required for complex A formation.

The protein resides in the cytoplasm. It is found in the nucleus. Its function is as follows. Necessary for the splicing of pre-mRNA. The BPB1(SF1)-u2af59-u2af23 complex has a role in the recognition of the branch site (5'-UACUAAC-3'), the pyrimidine tract and the 3'-splice site at the 3'-end of introns. This Schizosaccharomyces pombe (strain 972 / ATCC 24843) (Fission yeast) protein is Branchpoint-bridging protein (bpb1).